The following is a 488-amino-acid chain: MSVTYDDSVGVEVSSDSFWEVGNYKRTVKRIDDGHRLCGDLMNCLHERARIEKAYAQQLTEWARRWRQLVEKGPQYGTVEKAWMAVMSEAERVSELHLEVKASLMNEDFEKIKNWQKEAFHKQMMGGFKETKEAEDGFRKAQKPWAKKLKEVDAAKKAHHTACKEEKLAVSREANSKADPSLNPEQLKKLQDKIEKCKQDVLKTKDKYEKALKELDQTTPQYMENMEQVFEQCQQFEEKRLRFFREVLLEVQKHLDLSNVASYKGIYRELEQSIKAADAVEDLRWFRANHGPGMAMNWPQFEDEEWSADLNRTLSRREKKKAADGVTLTGINQTGDQSGQNKPSSNLSVPSNPAQSTQLQSSYNPFEDEDDTGSSVSEKEDIKAKNVSSYEKTQNYPADWSDDESNNPFSSTDANGDSNPFDEDTTSGTEVRVRALYDYEGQEHDELSFKAGDELTKIEDEDEQGWCKGRLDSGQVGLYPANYVEAIQ.

The F-BAR domain occupies 11–282; that stretch reads VEVSSDSFWE…SIKAADAVED (272 aa). The stretch at 25–274 forms a coiled coil; that stretch reads KRTVKRIDDG…GIYRELEQSI (250 aa). N6-acetyllysine is present on Lys-53. Residues 163–176 are compositionally biased toward basic and acidic residues; that stretch reads CKEEKLAVSREANS. The segment at 163 to 183 is disordered; that stretch reads CKEEKLAVSREANSKADPSLN. Ser-273 is modified (phosphoserine). Ser-315 bears the Phosphoserine; by PKC mark. A disordered region spans residues 316 to 429; it reads RREKKKAADG…PFDEDTTSGT (114 aa). A compositionally biased stretch (polar residues) spans 329-364; it reads TGINQTGDQSGQNKPSSNLSVPSNPAQSTQLQSSYN. The NPF1 signature appears at 364-366; sequence NPF. Phosphoserine; by IKKB is present on Ser-375. Positions 386–396 are enriched in polar residues; it reads NVSSYEKTQNY. Ser-401 is modified (phosphoserine). Residues 406 to 418 show a composition bias toward polar residues; sequence NNPFSSTDANGDS. The NPF2 motif lies at 407–409; it reads NPF. An NPF3 motif is present at residues 419–421; that stretch reads NPF. In terms of domain architecture, SH3 spans 428-488; that stretch reads GTEVRVRALY…YPANYVEAIQ (61 aa). Phosphoserine is present on Ser-448.

This sequence belongs to the PACSIN family. As to quaternary structure, homodimer. May form heterooligomers with other PACSINs. Interacts (via NPF motifs) with EHD1 (via EH domain). Interacts with EHD3. Interacts (via the SH3 domain) with MICALL1. Interacts with RAC1. Interacts (via SH3 domain) with DNM1, SYN1, SYNJ1 and WASL. Interacts with CAV1. Interacts with TRPV4. Forms a complex with EHD4 and MICALL1; the complex controls CDH5 trafficking and coordinates angiogenesis. Post-translationally, phosphorylated by casein kinase 2 (CK2) and protein kinase C (PKC). Phosphorylation by PKC probably decreases the membrane binding and tubulation capacities of PACSIN2, thereby modulating the lifetime of caveolae. As to expression, widely expressed (at protein level). Isoforms 1/3 are predominantly expressed in heart and in PC-12 cells, a pheochromocytoma cell line (at protein level). Isoforms 2/4 are widely expressed with highest levels in muscle, testis and brain (at protein level).

Its subcellular location is the cytoplasm. It is found in the cytoskeleton. The protein localises to the cytoplasmic vesicle membrane. The protein resides in the cell projection. It localises to the ruffle membrane. Its subcellular location is the early endosome. It is found in the recycling endosome membrane. The protein localises to the cell membrane. The protein resides in the membrane. It localises to the caveola. Its subcellular location is the cell junction. It is found in the adherens junction. Its function is as follows. Regulates the morphogenesis and endocytosis of caveolae. Lipid-binding protein that is able to promote the tubulation of the phosphatidic acid-containing membranes it preferentially binds. Plays a role in intracellular vesicle-mediated transport. Involved in the endocytosis of cell-surface receptors like the EGF receptor, contributing to its internalization in the absence of EGF stimulus. Facilitates endothelial front-rear polarity during migration by recruiting EHD4 and MICALL1 to asymmetric adherens junctions between leader and follower cells. This Rattus norvegicus (Rat) protein is Protein kinase C and casein kinase substrate in neurons 2 protein (Pacsin2).